Here is a 1337-residue protein sequence, read N- to C-terminus: Nucleoporin POM152 (1337 aa).

The disordered stretch occupies residues 1–48; the sequence is MEHRYNVFNDTPRGNHWMGSSVSGSPRPSYSSRPNVNTTRRFQYSDDE. The Cytoplasmic portion of the chain corresponds to 1–110; the sequence is MEHRYNVFND…TDVLEISKQR (110 aa). Residues 1–175 are pore side; it reads MEHRYNVFND…SFNIPRLTFK (175 aa). The segment covering 19–37 has biased composition (low complexity); that stretch reads GSSVSGSPRPSYSSRPNVN. A phosphoserine mark is found at S45 and S60. Residues 111-131 form a helical membrane-spanning segment; the sequence is TFAVILFLIIQCYKIYDLVIL. The Perinuclear space segment spans residues 132-148; that stretch reads KSGLPLSGLLFKNYRFN. Residues 149–169 traverse the membrane as a helical segment; sequence FISKYFIIDSFFLYVLPSFNI. Residues 170–172 lie on the Cytoplasmic side of the membrane; that stretch reads PRL. Residues 173 to 193 traverse the membrane as a helical segment; the sequence is TFKPWVVYLQILAMLLLNIFI. The Perinuclear space portion of the chain corresponds to 194–1337; the sequence is SSDHEFVLIS…FAKNDLFFNN (1144 aa). Residues 196–1337 are cisternal side; the sequence is DHEFVLISLI…FAKNDLFFNN (1142 aa). N-linked (GlcNAc...) asparagine glycosylation is present at N280. Tandem repeats lie at residues 390 to 413, 626 to 650, 732 to 755, 836 to 859, 943 to 966, 1058 to 1077, 1157 to 1178, and 1253 to 1276. Residues 390–1276 are 8 X 24 AA approximate repeats; it reads DRCIGDSDNV…EGTPPFSLTY (887 aa).

As to quaternary structure, component of the nuclear pore complex (NPC). NPC constitutes the exclusive means of nucleocytoplasmic transport. NPCs allow the passive diffusion of ions and small molecules and the active, nuclear transport receptor-mediated bidirectional transport of macromolecules such as proteins, RNAs, ribonucleoparticles (RNPs), and ribosomal subunits across the nuclear envelope. Due to its 8-fold rotational symmetry, all subunits are present with 8 copies or multiples thereof. Interacts with NUP188. In terms of processing, the N-terminus is blocked. Post-translationally, phosphorylated by CDC28.

The protein resides in the nucleus. It is found in the nuclear pore complex. The protein localises to the nucleus membrane. Functions as a component of the nuclear pore complex (NPC). NPC components, collectively referred to as nucleoporins (NUPs), can play the role of both NPC structural components and of docking or interaction partners for transiently associated nuclear transport factors. POM152 is important for the de novo assembly of NPCs. This chain is Nucleoporin POM152 (POM152), found in Saccharomyces cerevisiae (strain ATCC 204508 / S288c) (Baker's yeast).